The sequence spans 416 residues: Serine protease inhibitor A3K (416 aa).

Residues 1-20 (MAFIAALGLLMAGICPAVLC) form the signal peptide. N-linked (GlcNAc...) asparagine glycans are attached at residues asparagine 102, asparagine 182, asparagine 220, and asparagine 267. The segment at 365–392 (GTEGAAATAVTAALKSLPQTIPLLNFNR) is RCL.

It belongs to the serpin family. In terms of processing, N-glycosylated. In terms of tissue distribution, liver and plasma.

The protein localises to the secreted. Functionally, binds to and inhibits kallikreins. Inhibits trypsin but not chymotrypsin or elastase. The sequence is that of Serine protease inhibitor A3K (Serpina3k) from Rattus norvegicus (Rat).